The primary structure comprises 782 residues: Zinc finger protein 786 (782 aa).

The 72-residue stretch at 9–80 folds into the KRAB domain; it reads LTFEDVAIYF…WRESQKSGNI (72 aa). The tract at residues 141–164 is disordered; it reads PQRHDARAPPPLACGPSESTLKEG. The C2H2-type 1; degenerate zinc finger occupies 192–209; sequence CGESCWENNHLVMHQRGH. The C2H2-type 2 zinc finger occupies 240 to 262; the sequence is FRCGVCGKSFRRKLCLLRHLAAH. The segment at 285-364 is disordered; it reads SHRLPQQGEK…EGDTEALQHG (80 aa). The segment at 369 to 391 adopts a C2H2-type 3; degenerate zinc-finger fold; sequence CSCSECGERSPMSARLASPCRAH. 3 C2H2-type zinc fingers span residues 397–419, 425–447, and 453–475; these read FQCAHCTKRFRLRRLLQVHQHAH, FSCRKCGKGFAKQCKLTEHIRVH, and FRCAKCGRNFRQRGQLLRHQRLH. The C2H2-type 7; degenerate zinc finger occupies 481–503; the sequence is FQCPECGLSFRLESMLRAHRLRH. 9 C2H2-type zinc fingers span residues 509–531, 537–559, 565–587, 593–615, 621–643, 649–670, 676–698, 704–726, and 732–754; these read FSCSECGRGFTHQCKLREHLRVH, FQCLKCDKRFRLKGILKAHQHTH, FSCGECGKGFTRQSKLTEHLRVH, FQCPECNRSFRLKGQLLSHQRLH, FQCPECDKRYRVKADMKAHQLLH, FSCECGKGFVKHSKLIEHIRTH, FQCPKCDKSFRLKAQLLSHQGLH, FHCPECDKNFRERGHMLRHQRIH, and FACGDCGKGFIYKSKLAEHIRVH.

It belongs to the krueppel C2H2-type zinc-finger protein family.

The protein resides in the nucleus. May be involved in transcriptional regulation. The protein is Zinc finger protein 786 (ZNF786) of Homo sapiens (Human).